Here is a 668-residue protein sequence, read N- to C-terminus: Threonine--tRNA ligase (668 aa).

Residues M1 to R64 form the TGS domain. Positions D245–P553 are catalytic. Zn(2+) contacts are provided by C347, H398, and H530.

Belongs to the class-II aminoacyl-tRNA synthetase family. Homodimer. Zn(2+) is required as a cofactor.

The protein resides in the cytoplasm. It catalyses the reaction tRNA(Thr) + L-threonine + ATP = L-threonyl-tRNA(Thr) + AMP + diphosphate + H(+). Catalyzes the attachment of threonine to tRNA(Thr) in a two-step reaction: L-threonine is first activated by ATP to form Thr-AMP and then transferred to the acceptor end of tRNA(Thr). Also edits incorrectly charged L-seryl-tRNA(Thr). The chain is Threonine--tRNA ligase from Rhizobium etli (strain CIAT 652).